A 351-amino-acid chain; its full sequence is Fe(3+) ions import ATP-binding protein FbpC (351 aa).

The 231-residue stretch at 7–237 (VVLKNICKRF…PKSMFMANFM (231 aa)) folds into the ABC transporter domain. 39–46 (GPSGCGKT) is a binding site for ATP.

This sequence belongs to the ABC transporter superfamily. Fe(3+) ion importer (TC 3.A.1.10) family. As to quaternary structure, the complex is composed of two ATP-binding proteins (FbpC), two transmembrane proteins (FbpB) and a solute-binding protein (FbpA).

It is found in the cell inner membrane. It carries out the reaction Fe(3+)(out) + ATP + H2O = Fe(3+)(in) + ADP + phosphate + H(+). Functionally, part of the ABC transporter complex FbpABC involved in Fe(3+) ions import. Responsible for energy coupling to the transport system. This chain is Fe(3+) ions import ATP-binding protein FbpC, found in Vibrio cholerae serotype O1 (strain ATCC 39315 / El Tor Inaba N16961).